A 246-amino-acid chain; its full sequence is Bacteriorhodopsin-II-like protein (246 aa).

7 consecutive transmembrane segments (helical) span residues 7–27 (EATWLWIGTIGMVLGTVYFAV), 45–65 (TLIPAIAAAAYLAMATGLGVI), 82–102 (YADWLLTTPLLIIDLALVAGA), 107–127 (LYKLIIIDAIMILGGLAGSMM), 135–155 (IVWWAVSTAAFIILLYYLLGE), 182–202 (WALYPIVWILGTGGGFGIIAV), and 205–225 (EIMLYVMLDIGTKIGFGAVLL). At K217 the chain carries N6-(retinylidene)lysine.

The protein belongs to the archaeal/bacterial/fungal opsin family. In terms of processing, the covalent binding of retinal to the apoprotein, bacterioopsin, generates bacteriorhodopsin.

The protein resides in the cell membrane. Functionally, has no proton-pumping activity but is potentially capable of functioning as a sensory SRII-like protein. The chromophore contains 36.5% all-trans-, 7.6% 11-cis- and 56.4% 13-cis-retinal in the dark and 30.1% 11-cis- and 47.7% 13-cis-retinal upon illumination with &gt;460 nm light. The polypeptide is Bacteriorhodopsin-II-like protein (bop2) (Haloquadratum walsbyi (strain DSM 16790 / HBSQ001)).